Consider the following 267-residue polypeptide: Tryptophan synthase alpha chain (267 aa).

Active-site proton acceptor residues include E47 and D58.

It belongs to the TrpA family. As to quaternary structure, tetramer of two alpha and two beta chains.

The catalysed reaction is (1S,2R)-1-C-(indol-3-yl)glycerol 3-phosphate + L-serine = D-glyceraldehyde 3-phosphate + L-tryptophan + H2O. The protein operates within amino-acid biosynthesis; L-tryptophan biosynthesis; L-tryptophan from chorismate: step 5/5. Functionally, the alpha subunit is responsible for the aldol cleavage of indoleglycerol phosphate to indole and glyceraldehyde 3-phosphate. This chain is Tryptophan synthase alpha chain, found in Chlorobium phaeovibrioides (strain DSM 265 / 1930) (Prosthecochloris vibrioformis (strain DSM 265)).